Reading from the N-terminus, the 145-residue chain is Large ribosomal subunit protein uL11 (145 aa).

This sequence belongs to the universal ribosomal protein uL11 family. As to quaternary structure, part of the ribosomal stalk of the 50S ribosomal subunit. Interacts with L10 and the large rRNA to form the base of the stalk. L10 forms an elongated spine to which L12 dimers bind in a sequential fashion forming a multimeric L10(L12)X complex. One or more lysine residues are methylated.

Its function is as follows. Forms part of the ribosomal stalk which helps the ribosome interact with GTP-bound translation factors. The polypeptide is Large ribosomal subunit protein uL11 (Rickettsia typhi (strain ATCC VR-144 / Wilmington)).